We begin with the raw amino-acid sequence, 707 residues long: DNA ligase (707 aa).

NAD(+)-binding positions include D36–D40, S85–L86, and E116. The N6-AMP-lysine intermediate role is filled by K118. 4 residues coordinate NAD(+): R139, E180, K298, and K322. The Zn(2+) site is built by C416, C419, C434, and C440. Residues A613 to V707 enclose the BRCT domain.

This sequence belongs to the NAD-dependent DNA ligase family. LigA subfamily. The cofactor is Mg(2+). Mn(2+) serves as cofactor.

The enzyme catalyses NAD(+) + (deoxyribonucleotide)n-3'-hydroxyl + 5'-phospho-(deoxyribonucleotide)m = (deoxyribonucleotide)n+m + AMP + beta-nicotinamide D-nucleotide.. DNA ligase that catalyzes the formation of phosphodiester linkages between 5'-phosphoryl and 3'-hydroxyl groups in double-stranded DNA using NAD as a coenzyme and as the energy source for the reaction. It is essential for DNA replication and repair of damaged DNA. The protein is DNA ligase of Nitrosospira multiformis (strain ATCC 25196 / NCIMB 11849 / C 71).